A 445-amino-acid chain; its full sequence is tRNA-2-methylthio-N(6)-dimethylallyladenosine synthase (445 aa).

The MTTase N-terminal domain occupies 9–125; sequence LKYRILTYGC…LPYLIARAKE (117 aa). The [4Fe-4S] cluster site is built by C18, C54, C88, C162, C166, and C169. Residues 148-378 enclose the Radical SAM core domain; sequence RKPGLSAFVN…NRRQYQIATE (231 aa). Residues 381–444 enclose the TRAM domain; the sequence is QELQGSIQEV…TFSLFGEIFN (64 aa).

It belongs to the methylthiotransferase family. MiaB subfamily. In terms of assembly, monomer. [4Fe-4S] cluster is required as a cofactor.

The protein localises to the cytoplasm. The catalysed reaction is N(6)-dimethylallyladenosine(37) in tRNA + (sulfur carrier)-SH + AH2 + 2 S-adenosyl-L-methionine = 2-methylsulfanyl-N(6)-dimethylallyladenosine(37) in tRNA + (sulfur carrier)-H + 5'-deoxyadenosine + L-methionine + A + S-adenosyl-L-homocysteine + 2 H(+). Functionally, catalyzes the methylthiolation of N6-(dimethylallyl)adenosine (i(6)A), leading to the formation of 2-methylthio-N6-(dimethylallyl)adenosine (ms(2)i(6)A) at position 37 in tRNAs that read codons beginning with uridine. The protein is tRNA-2-methylthio-N(6)-dimethylallyladenosine synthase of Syntrophomonas wolfei subsp. wolfei (strain DSM 2245B / Goettingen).